A 575-amino-acid chain; its full sequence is Adenine deaminase (575 aa).

This sequence belongs to the metallo-dependent hydrolases superfamily. Adenine deaminase family. Requires Mn(2+) as cofactor.

The enzyme catalyses adenine + H2O + H(+) = hypoxanthine + NH4(+). This chain is Adenine deaminase, found in Nitratidesulfovibrio vulgaris (strain DP4) (Desulfovibrio vulgaris).